The chain runs to 302 residues: 4-diphosphocytidyl-2-C-methyl-D-erythritol kinase (302 aa).

Residue Lys-20 is part of the active site. An ATP-binding site is contributed by 106-116 (PVASGVGGGSG). Asp-148 is a catalytic residue.

This sequence belongs to the GHMP kinase family. IspE subfamily.

The enzyme catalyses 4-CDP-2-C-methyl-D-erythritol + ATP = 4-CDP-2-C-methyl-D-erythritol 2-phosphate + ADP + H(+). Its pathway is isoprenoid biosynthesis; isopentenyl diphosphate biosynthesis via DXP pathway; isopentenyl diphosphate from 1-deoxy-D-xylulose 5-phosphate: step 3/6. Its function is as follows. Catalyzes the phosphorylation of the position 2 hydroxy group of 4-diphosphocytidyl-2C-methyl-D-erythritol. The protein is 4-diphosphocytidyl-2-C-methyl-D-erythritol kinase of Bartonella henselae (strain ATCC 49882 / DSM 28221 / CCUG 30454 / Houston 1) (Rochalimaea henselae).